The chain runs to 1197 residues: Sensor protein EvgS (1197 aa).

Residues 1–21 (MKFLPYIFLLCCGLWSTISFA) form the signal peptide. Residues 22–325 (DEDYIEYRGI…SMTDENGSVR (304 aa)) are Cytoplasmic-facing. A helical membrane pass occupies residues 326–346 (GVMGDILNIITLQTGLNFSPI). At 347 to 537 (TVSHNIHAGT…TWDLYSEQFY (191 aa)) the chain is on the periplasmic side. Residues 538–558 (IVTTLSVLLVGSSLLWGFYLL) traverse the membrane as a helical segment. The Cytoplasmic segment spans residues 559–1197 (RSVRRRKVIQ…EIAVFCQQNN (639 aa)). The region spanning 718–938 (TMSHEIRTPI…TFTITIPVEI (221 aa)) is the Histidine kinase domain. A Phosphohistidine; by autocatalysis modification is found at H721. The 115-residue stretch at 960–1074 (SILIADDHPT…VLKTHLSQLH (115 aa)) folds into the Response regulatory domain. Position 1009 is a 4-aspartylphosphate (D1009). The region spanning 1098–1197 (DLQLMQEILM…EIAVFCQQNN (100 aa)) is the HPt domain. H1137 carries the phosphohistidine modification.

Post-translationally, activation requires a sequential transfer of a phosphate group from a His in the primary transmitter domain, to an Asp in the receiver domain and to a His in the secondary transmitter domain.

It localises to the cell inner membrane. The catalysed reaction is ATP + protein L-histidine = ADP + protein N-phospho-L-histidine.. Functionally, member of the two-component regulatory system EvgS/EvgA. Phosphorylates EvgA via a four-step phosphorelay in response to environmental signals. The chain is Sensor protein EvgS (evgS) from Escherichia coli O157:H7.